Here is a 128-residue protein sequence, read N- to C-terminus: Aspartate 1-decarboxylase (128 aa).

The active-site Schiff-base intermediate with substrate; via pyruvic acid is Ser25. Ser25 is modified (pyruvic acid (Ser)). Thr57 provides a ligand contact to substrate. Residue Tyr58 is the Proton donor of the active site. 73 to 75 (GSA) provides a ligand contact to substrate.

The protein belongs to the PanD family. As to quaternary structure, heterooctamer of four alpha and four beta subunits. It depends on pyruvate as a cofactor. In terms of processing, is synthesized initially as an inactive proenzyme, which is activated by self-cleavage at a specific serine bond to produce a beta-subunit with a hydroxyl group at its C-terminus and an alpha-subunit with a pyruvoyl group at its N-terminus.

The protein localises to the cytoplasm. The enzyme catalyses L-aspartate + H(+) = beta-alanine + CO2. The protein operates within cofactor biosynthesis; (R)-pantothenate biosynthesis; beta-alanine from L-aspartate: step 1/1. Functionally, catalyzes the pyruvoyl-dependent decarboxylation of aspartate to produce beta-alanine. The polypeptide is Aspartate 1-decarboxylase (Burkholderia ambifaria (strain ATCC BAA-244 / DSM 16087 / CCUG 44356 / LMG 19182 / AMMD) (Burkholderia cepacia (strain AMMD))).